The primary structure comprises 462 residues: tRNA(Ile)-lysidine synthase (462 aa).

An ATP-binding site is contributed by 31–36 (SGGRDS).

The protein belongs to the tRNA(Ile)-lysidine synthase family.

The protein localises to the cytoplasm. The enzyme catalyses cytidine(34) in tRNA(Ile2) + L-lysine + ATP = lysidine(34) in tRNA(Ile2) + AMP + diphosphate + H(+). Functionally, ligates lysine onto the cytidine present at position 34 of the AUA codon-specific tRNA(Ile) that contains the anticodon CAU, in an ATP-dependent manner. Cytidine is converted to lysidine, thus changing the amino acid specificity of the tRNA from methionine to isoleucine. This chain is tRNA(Ile)-lysidine synthase, found in Ralstonia nicotianae (strain ATCC BAA-1114 / GMI1000) (Ralstonia solanacearum).